Consider the following 124-residue polypeptide: Small ribosomal subunit protein uS12c (124 aa).

The segment at 1-28 (MPTFQQLVRSARKPHAKKTKSPALQGCP) is disordered. The span at 10 to 20 (SARKPHAKKTK) shows a compositional bias: basic residues.

This sequence belongs to the universal ribosomal protein uS12 family. As to quaternary structure, part of the 30S ribosomal subunit.

The protein resides in the plastid. With S4 and S5 plays an important role in translational accuracy. Located at the interface of the 30S and 50S subunits. The polypeptide is Small ribosomal subunit protein uS12c (rps12) (Prototheca wickerhamii).